The primary structure comprises 323 residues: Cyclin-H (323 aa).

Serine 5 carries the phosphoserine; by CDK8 modification. Serine 132 bears the Phosphoserine mark. The interval 295–323 (KGYEDDDYVSKKPKQEEEEWTDDDLVDSL) is disordered. Phosphoserine; by CDK8 is present on serine 304. Over residues 310–323 (EEEEWTDDDLVDSL) the composition is skewed to acidic residues. A Phosphothreonine modification is found at threonine 315. Serine 322 bears the Phosphoserine mark.

This sequence belongs to the cyclin family. Cyclin C subfamily. In terms of assembly, associates primarily with CDK7 and MAT1 to form the CAK complex. CAK can further associate with the core-TFIIH to form the TFIIH basal transcription factor. Expressed in both the germinal and somatic cells of the testis.

The protein resides in the nucleus. In terms of biological role, regulates CDK7, the catalytic subunit of the CDK-activating kinase (CAK) enzymatic complex. CAK activates the cyclin-associated kinases CDK1, CDK2, CDK4 and CDK6 by threonine phosphorylation. CAK complexed to the core-TFIIH basal transcription factor activates RNA polymerase II by serine phosphorylation of the repetitive C-terminal domain (CTD) of its large subunit (POLR2A), allowing its escape from the promoter and elongation of the transcripts. Involved in cell cycle control and in RNA transcription by RNA polymerase II. Its expression and activity are constant throughout the cell cycle. The polypeptide is Cyclin-H (Ccnh) (Mus musculus (Mouse)).